A 492-amino-acid polypeptide reads, in one-letter code: V-type proton ATPase subunit B 2 (492 aa).

Belongs to the ATPase alpha/beta chains family. As to quaternary structure, V-ATPase is a heteromultimeric enzyme composed of a peripheral catalytic V1 complex (main components: subunits A, B, C, D, E, and F) attached to an integral membrane V0 proton pore complex (main component: the proteolipid protein).

In terms of biological role, non-catalytic subunit of the peripheral V1 complex of vacuolar ATPase. V-ATPase is responsible for acidifying a variety of intracellular compartments in eukaryotic cells. This Acetabularia acetabulum (Mermaid's wine glass) protein is V-type proton ATPase subunit B 2.